The chain runs to 194 residues: Nucleoside triphosphate pyrophosphatase (194 aa).

The Proton acceptor role is filled by Asp-68.

Belongs to the Maf family. Requires a divalent metal cation as cofactor.

The protein localises to the cytoplasm. It catalyses the reaction a ribonucleoside 5'-triphosphate + H2O = a ribonucleoside 5'-phosphate + diphosphate + H(+). The enzyme catalyses a 2'-deoxyribonucleoside 5'-triphosphate + H2O = a 2'-deoxyribonucleoside 5'-phosphate + diphosphate + H(+). Nucleoside triphosphate pyrophosphatase. May have a dual role in cell division arrest and in preventing the incorporation of modified nucleotides into cellular nucleic acids. This Corynebacterium jeikeium (strain K411) protein is Nucleoside triphosphate pyrophosphatase.